The primary structure comprises 341 residues: Homeobox protein mls-2 (341 aa).

2 disordered regions span residues 1–78 and 139–209; these read MPTS…DSTN and SNPD…TVFS. The segment covering 64-78 has biased composition (polar residues); sequence TTQSSPSASSEDSTN. Over residues 153 to 166 the composition is skewed to basic and acidic residues; that stretch reads KDEKSEGKDGETRD. Residues 201–260 constitute a DNA-binding region (homeobox); sequence KKKTRTVFSRSQVSQLEMMFECKRYLSSQERSNLAQKLHLTETQVKIWFQNRRNKFKRQA.

Belongs to the HMX homeobox family. In terms of tissue distribution, expressed in a subset of head neurons, including AIM and ASK (at protein level).

The protein resides in the nucleus. Transcription factor that binds to the promoter of target genes. Regulates fate specification and/or differentiation of multiple cell types arising from the embryonic mesodermal (M) lineage and the ABp(l/r)paa precursors. In the postembryonic M lineage, regulates cleavage orientation, cell proliferation and cell fate specification. Regulates hlh-1 expression to specify coelomocyte fate in the mesodermal (M) lineage. In AWC neurons, initiates expression of ceh-36, leading to the expression of terminal differentiation genes. Regulates ventral cephalic sheath (CEPsh) glia differentiation and expression of transcription factor hlh-17 in CEPsh glia. Promotes terminal differentiation and morphogenesis of the epithelial duct and pore cells. In the duct cell, cooperates with the EGF-Ras-ERK pathway in turning on the terminal differentiation gene lin-48. The protein is Homeobox protein mls-2 of Caenorhabditis elegans.